Reading from the N-terminus, the 95-residue chain is Large ribosomal subunit protein bL25 (95 aa).

This sequence belongs to the bacterial ribosomal protein bL25 family. As to quaternary structure, part of the 50S ribosomal subunit; part of the 5S rRNA/L5/L18/L25 subcomplex. Contacts the 5S rRNA. Binds to the 5S rRNA independently of L5 and L18.

Its function is as follows. This is one of the proteins that binds to the 5S RNA in the ribosome where it forms part of the central protuberance. In Buchnera aphidicola subsp. Acyrthosiphon pisum (strain 5A), this protein is Large ribosomal subunit protein bL25.